The primary structure comprises 557 residues: Fatty acyl-CoA hydrolase precursor, medium chain (557 aa).

Positions 1–25 are cleaved as a signal peptide; it reads MATEKNTLLSLILTAGITALVATGQ. Cysteine 93 and cysteine 122 form a disulfide bridge. Residue serine 227 is the Acyl-ester intermediate of the active site. Catalysis depends on charge relay system residues glutamate 345 and histidine 460. N-linked (GlcNAc...) asparagine glycosylation occurs at asparagine 476.

Belongs to the type-B carboxylesterase/lipase family. As to expression, highest levels in uropygial gland, much lower in liver and kidney.

In terms of biological role, fatty acid biosynthesis chain termination and release of the free fatty acid product is achieved by hydrolysis of the thio ester by a thioesterase. This thioesterase may be associated with peroxisome proliferation and may play a role in the production of 3-hydroxy fatty acid diester pheromones. The polypeptide is Fatty acyl-CoA hydrolase precursor, medium chain (Anas platyrhynchos (Mallard)).